The following is a 339-amino-acid chain: MDPGVSSHLRTASLDEARRLPELERVLKSGWLIKKGHATSTKKQLWAVLRRDQLSFYKDEKEYKTKFIFPTQDISAVAYYKEKSPKTFFLYLNEKIIRLIATSNEDAEEWVHVLRSTTGYRAPFSRHPISYILANSSSRTESEPNVQISDTDFDNISTEPRNQTTSPLDLETGQGDHFCTSLYDLIQFGKLRPPGINEENANYPFNPQEVNTLNKHRHSASLQNLYKLLDENKVLMQGTIHWLHGNLHRWSKCWAVVRGYGMTIYNTNREYKPVKVIPIADIQDVAEINVPESSHKYFFTVITQNKPIEFRVDNEDSLILWVAALKTSIDKANGTFTAC.

Positions 25–119 (RVLKSGWLIK…WVHVLRSTTG (95 aa)) constitute a PH 1 domain. Polar residues predominate over residues 141–167 (ESEPNVQISDTDFDNISTEPRNQTTSP). The disordered stretch occupies residues 141-170 (ESEPNVQISDTDFDNISTEPRNQTTSPLDL). Residues 233–330 (KVLMQGTIHW…WVAALKTSID (98 aa)) form the PH 2 domain.

In terms of assembly, interacts (via domain PH 1) with phosphatidylinositol 4-phosphate 5-kinase its3; the interaction is direct but opy1 does not appear to regulate its3 localization or function.

Its subcellular location is the cell tip. The protein resides in the cell membrane. Binds phosphatidylinositol 4,5-bisphosphate (PtdIns(4,5)P2/PIP2) at the cell membrane. This Schizosaccharomyces pombe (strain 972 / ATCC 24843) (Fission yeast) protein is Pleckstrin homology domain protein opy1.